The sequence spans 946 residues: MSEADAGARDESPSRTAEEPAAAMRIKEERRSSSVDVVDVGNGELLVLHSIFYQGKTLRLPGNRAHMYPVVFQMIKGVCSLVKQLVVAFPKGWDQNTPSISEIAALTKSFNRVAKPFASNWSGSYNTDTLKEWGEPNCSAEVAKAITTYAYECAVPRPADLNQHYKSFTSETYGETNPEQLISIIDELNIGPQDVFVDLGSGIGQLVCLTAAYAKCKKSVGIELSQVPSNFAQDLAGYFKKFMSHFGKNHGKFEHIQGDFLNPKFKQLICEEATVIFINNFAFDAALMLRINTELLQDLKHGTRIVTTKELGTNKKEITFRSTSDINAISHTTELKTTESAVSWTSSHVKFWLTTIDHTKLIKYYEDQRRRQEVKSSREGSEISDGRDMGLKKRKSQRESSVHPDKLQKTEQAAASSHQSPKWNEPDTDYTPPAKKPKKEKLLREQQDATPASSHHHGASSSSGKDREKEKEKKKNKIYEEKKVKTPKPPKSSSSRYSSETPTSHHHHHRSNSISHSSDVIRPSQPKATAPPPPLVPAPARATASTPPPAPPAARAQSPKREEPLEPPTDLIHHGGGQLDAKTMNALHTIREAATTSAQAAAIQDAINSVLSQPTEASPSAFGPPLAHLPAPVAIYPTPPPPPAPAPAAPQQASAAPAAPNVMPVCTEIAAEQRHTFMIPPTDPFYNMIVSYYFAMKQFCNQSKTADPEFVGRLRLDIEAEEARRAELKESITLTSTQIDELLATGVNTLKSRLDELGMPSVTDVTELLAGSKQIVTQHKGLTNTVAQMENSVAVEEQKLRLIGGPDAVRYFDEAMSHPNVDIAKLTDLVITTRPPNFVAQILLPDDSPTASIDSKVSPSSSSSRRPRQPKPRANNTAAGAGGGGKRGTSGGRKSDGGGGGGATEDVELEIRQFVQHALKVDNAVKEKERKARGNFMAAAADRIPR.

Positions 1 to 18 (MSEADAGARDESPSRTAE) are enriched in basic and acidic residues. A disordered region spans residues 1 to 28 (MSEADAGARDESPSRTAEEPAAAMRIKE). Residues 54 to 369 (QGKTLRLPGN…KLIKYYEDQR (316 aa)) enclose the DOT1 domain. S-adenosyl-L-methionine contacts are provided by residues 173–176 (YGET), 196–205 (FVDLGSGIGQ), Glu223, and 259–260 (DF). The span at 368-409 (QRRRQEVKSSREGSEISDGRDMGLKKRKSQRESSVHPDKLQK) shows a compositional bias: basic and acidic residues. Disordered regions lie at residues 368 to 577 (QRRR…HGGG) and 849 to 905 (PTAS…GATE). The span at 410–422 (TEQAAASSHQSPK) shows a compositional bias: polar residues. Over residues 464–484 (GKDREKEKEKKKNKIYEEKKV) the composition is skewed to basic and acidic residues. Low complexity-rich tracts occupy residues 491–502 (KSSSSRYSSETP), 512–528 (NSIS…QPKA), and 855–864 (SKVSPSSSSS). Residues 880-903 (GAGGGGKRGTSGGRKSDGGGGGGA) are compositionally biased toward gly residues.

Belongs to the class I-like SAM-binding methyltransferase superfamily. DOT1 family. In terms of assembly, interacts with zfp-1 (via C-terminus) to form a heterodimer known as the zfp-1-dot-1.1 complex or DotCom complex.

It localises to the nucleus. Its subcellular location is the chromosome. The enzyme catalyses L-lysyl(79)-[histone H3] + 3 S-adenosyl-L-methionine = N(6),N(6),N(6)-trimethyl-L-lysyl(79)-[histone H3] + 3 S-adenosyl-L-homocysteine + 3 H(+). Its function is as follows. Histone methyltransferase, which in complex with zfp-1, methylates 'Lys-79' of histone H3 to activate transcription. During stress, the zfp-1-dot-1.1 complex also plays a role in the deubiquitination of histone H2B sites, which negatively modulates the RNA polymerase II-induced transcription of highly expressed genes. Involved in controlling tissue-specific gene expression, particularly in the epidermis. In Caenorhabditis elegans, this protein is Histone-lysine N-methyltransferase, H3 lysine-79 specific.